The sequence spans 210 residues: ATP phosphoribosyltransferase (210 aa).

It belongs to the ATP phosphoribosyltransferase family. Short subfamily. Heteromultimer composed of HisG and HisZ subunits.

It localises to the cytoplasm. It catalyses the reaction 1-(5-phospho-beta-D-ribosyl)-ATP + diphosphate = 5-phospho-alpha-D-ribose 1-diphosphate + ATP. Its pathway is amino-acid biosynthesis; L-histidine biosynthesis; L-histidine from 5-phospho-alpha-D-ribose 1-diphosphate: step 1/9. In terms of biological role, catalyzes the condensation of ATP and 5-phosphoribose 1-diphosphate to form N'-(5'-phosphoribosyl)-ATP (PR-ATP). Has a crucial role in the pathway because the rate of histidine biosynthesis seems to be controlled primarily by regulation of HisG enzymatic activity. In Bacillus cytotoxicus (strain DSM 22905 / CIP 110041 / 391-98 / NVH 391-98), this protein is ATP phosphoribosyltransferase.